We begin with the raw amino-acid sequence, 225 residues long: uncharacterized protein (225 aa).

Residues 1 to 22 (MLQHYSVSWKKGLAALCLLAVA) form the signal peptide. Residues 161–190 (GNLTAAEEKKTGCLVCLDSCPVGIVSNATY) enclose the 4Fe-4S ferredoxin-type domain.

This is an uncharacterized protein from Escherichia coli (strain K12).